We begin with the raw amino-acid sequence, 399 residues long: PCI domain-containing protein 2 (399 aa).

The 182-residue stretch at valine 210–proline 391 folds into the PCI domain.

Belongs to the CSN12 family.

The polypeptide is PCI domain-containing protein 2 (pcid2) (Xenopus laevis (African clawed frog)).